Reading from the N-terminus, the 213-residue chain is Urease accessory protein UreG (213 aa).

A GTP-binding site is contributed by 10 to 17; the sequence is GPVGSGKT.

It belongs to the SIMIBI class G3E GTPase family. UreG subfamily. In terms of assembly, homodimer. UreD, UreF and UreG form a complex that acts as a GTP-hydrolysis-dependent molecular chaperone, activating the urease apoprotein by helping to assemble the nickel containing metallocenter of UreC. The UreE protein probably delivers the nickel.

Its subcellular location is the cytoplasm. In terms of biological role, facilitates the functional incorporation of the urease nickel metallocenter. This process requires GTP hydrolysis, probably effectuated by UreG. This Deinococcus radiodurans (strain ATCC 13939 / DSM 20539 / JCM 16871 / CCUG 27074 / LMG 4051 / NBRC 15346 / NCIMB 9279 / VKM B-1422 / R1) protein is Urease accessory protein UreG.